A 374-amino-acid polypeptide reads, in one-letter code: Layilin (374 aa).

Positions M1–G24 are cleaved as a signal peptide. The Extracellular portion of the chain corresponds to R25 to E221. Residues T37–K177 form the C-type lectin domain. 2 disulfide bridges follow: C63–C176 and C142–C168. Residue N109 is glycosylated (N-linked (GlcNAc...) asparagine). A disordered region spans residues S184–T212. Residues A222–V242 traverse the membrane as a helical segment. Over T243–Y374 the chain is Cytoplasmic. Residues S279 and S292 each carry the phosphoserine modification. Residues D323–W367 are interaction with NF2. The interval N330–Y374 is interaction with TLN1. Tandem repeats lie at residues E333–V337, E343–V347, N349–Y352, E364–V368, and N370–Y373. The interval E333–V368 is 3 X 5 AA repeats of E-S-G-X-V. Positions N349 to Y373 are 2 X 4 AA repeats of N-X-I-Y.

As to quaternary structure, interacts with NF2 and RDX. Interacts with TLN1. In terms of tissue distribution, widely expressed. Abundant in the ovary.

It is found in the membrane. Receptor for hyaluronate. The sequence is that of Layilin (LAYN) from Cricetulus griseus (Chinese hamster).